The sequence spans 142 residues: Large ribosomal subunit protein uL11 (142 aa).

It belongs to the universal ribosomal protein uL11 family. As to quaternary structure, part of the ribosomal stalk of the 50S ribosomal subunit. Interacts with L10 and the large rRNA to form the base of the stalk. L10 forms an elongated spine to which L12 dimers bind in a sequential fashion forming a multimeric L10(L12)X complex. Post-translationally, one or more lysine residues are methylated.

In terms of biological role, forms part of the ribosomal stalk which helps the ribosome interact with GTP-bound translation factors. The chain is Large ribosomal subunit protein uL11 from Pasteurella multocida (strain Pm70).